Here is a 650-residue protein sequence, read N- to C-terminus: Serine/threonine-protein phosphatase with EF-hands 1 (650 aa).

An IQ domain is found at 16 to 45 (VIKAALVIQNWYRRYRARLRVRQHYALAIF). A catalytic region spans residues 124–456 (IHILLQAFKQ…PQFFQYQVTS (333 aa)). Aspartate 175, histidine 177, aspartate 204, and asparagine 236 together coordinate Mn(2+). Residue histidine 237 is the Proton donor of the active site. Mn(2+) is bound at residue histidine 288. The disordered stretch occupies residues 315–348 (PVLGNQETGEKRNKSASNYVEPRKVEPDKTPSED). Over residues 335 to 348 (EPRKVEPDKTPSED) the composition is skewed to basic and acidic residues. Histidine 404 contacts Mn(2+). 3 EF-hand domains span residues 484-519 (SRKT…ILGL), 567-602 (RYRS…FNAH), and 607-642 (IDDS…VHKY). The Ca(2+) site is built by aspartate 497, serine 499, serine 501, arginine 503, glutamate 508, aspartate 580, aspartate 582, serine 584, glutamate 591, aspartate 620, asparagine 622, aspartate 624, asparagine 626, and glutamate 631.

Belongs to the PPP phosphatase family. Mn(2+) serves as cofactor. Requires Mg(2+) as cofactor. In the embryo it is almost exclusively expressed in the peripheral nervous system, within sensory neurons of cranial and dorsal root ganglia. Otherwise found in fetal inner ear and a small group of neurons in the midbrain/pons junction.

The catalysed reaction is O-phospho-L-seryl-[protein] + H2O = L-seryl-[protein] + phosphate. The enzyme catalyses O-phospho-L-threonyl-[protein] + H2O = L-threonyl-[protein] + phosphate. Its activity is regulated as follows. Activated by calcium. Its function is as follows. May have a role in the recovery or adaptation response of photoreceptors. May have a role in diverse sensory neurons and in development. The protein is Serine/threonine-protein phosphatase with EF-hands 1 (Ppef1) of Mus musculus (Mouse).